The following is a 232-amino-acid chain: tRNA (guanine-N(7)-)-methyltransferase (232 aa).

The S-adenosyl-L-methionine site is built by Glu63, Glu88, Asp115, and Asp137. Asp137 is an active-site residue. Residues Lys141, Asp173, and Thr211–Glu214 each bind substrate.

Belongs to the class I-like SAM-binding methyltransferase superfamily. TrmB family.

The catalysed reaction is guanosine(46) in tRNA + S-adenosyl-L-methionine = N(7)-methylguanosine(46) in tRNA + S-adenosyl-L-homocysteine. It functions in the pathway tRNA modification; N(7)-methylguanine-tRNA biosynthesis. Catalyzes the formation of N(7)-methylguanine at position 46 (m7G46) in tRNA. The sequence is that of tRNA (guanine-N(7)-)-methyltransferase from Chelativorans sp. (strain BNC1).